Here is a 433-residue protein sequence, read N- to C-terminus: D-amino acid dehydrogenase (433 aa).

3–17 is a binding site for FAD; sequence VVILGSGVVGVASAW.

It belongs to the DadA oxidoreductase family. FAD serves as cofactor.

The enzyme catalyses a D-alpha-amino acid + A + H2O = a 2-oxocarboxylate + AH2 + NH4(+). Its pathway is amino-acid degradation; D-alanine degradation; NH(3) and pyruvate from D-alanine: step 1/1. Its function is as follows. Oxidative deamination of D-amino acids. In Erwinia tasmaniensis (strain DSM 17950 / CFBP 7177 / CIP 109463 / NCPPB 4357 / Et1/99), this protein is D-amino acid dehydrogenase.